The sequence spans 204 residues: uncharacterized protein (204 aa).

Residues 1 to 21 (MIKKFLLFAMLNIFLTNKAHS) form the signal peptide.

This is an uncharacterized protein from Borreliella burgdorferi (strain ATCC 35210 / DSM 4680 / CIP 102532 / B31) (Borrelia burgdorferi).